We begin with the raw amino-acid sequence, 204 residues long: Outer-membrane lipoprotein carrier protein (204 aa).

Positions 1–21 (MKKIAVTCALLSAFAVSSVWA) are cleaved as a signal peptide. Positions 169 to 204 (QRSSYQLKSQQNGAVDMSKFTFTPPQGVTVDDQRNK) are disordered. Residues 171-181 (SSYQLKSQQNG) show a composition bias toward polar residues.

The protein belongs to the LolA family. As to quaternary structure, monomer.

The protein localises to the periplasm. Functionally, participates in the translocation of lipoproteins from the inner membrane to the outer membrane. Only forms a complex with a lipoprotein if the residue after the N-terminal Cys is not an aspartate (The Asp acts as a targeting signal to indicate that the lipoprotein should stay in the inner membrane). The sequence is that of Outer-membrane lipoprotein carrier protein from Cronobacter sakazakii (strain ATCC BAA-894) (Enterobacter sakazakii).